The following is a 96-amino-acid chain: Sec-independent protein translocase protein TatA (96 aa).

Residues 1-21 (MGFSSIWHWIIVLVVVLLLFG) form a helical membrane-spanning segment. Residues 42 to 96 (GMADDEDDEAASVSAERRGIEDGKPAQTIYPPQQPQQPQQPPQQPPVHRDDAPRG) are disordered. The segment covering 56-65 (AERRGIEDGK) has biased composition (basic and acidic residues). A compositionally biased stretch (pro residues) spans 73-86 (PQQPQQPQQPPQQP).

It belongs to the TatA/E family. As to quaternary structure, the Tat system comprises two distinct complexes: a TatABC complex, containing multiple copies of TatA, TatB and TatC subunits, and a separate TatA complex, containing only TatA subunits. Substrates initially bind to the TatABC complex, which probably triggers association of the separate TatA complex to form the active translocon.

The protein resides in the cell inner membrane. In terms of biological role, part of the twin-arginine translocation (Tat) system that transports large folded proteins containing a characteristic twin-arginine motif in their signal peptide across membranes. TatA could form the protein-conducting channel of the Tat system. The protein is Sec-independent protein translocase protein TatA of Rhodospirillum rubrum (strain ATCC 11170 / ATH 1.1.1 / DSM 467 / LMG 4362 / NCIMB 8255 / S1).